Consider the following 273-residue polypeptide: Dermonecrotic toxin LdSicTox-alphaIB3aiii (273 aa).

His5 is a catalytic residue. Positions 25 and 27 each coordinate Mg(2+). The Nucleophile role is filled by His41. Cystine bridges form between Cys45–Cys51 and Cys47–Cys190. Residue Asp85 coordinates Mg(2+).

This sequence belongs to the arthropod phospholipase D family. Class II subfamily. Mg(2+) is required as a cofactor. Expressed by the venom gland.

Its subcellular location is the secreted. It catalyses the reaction an N-(acyl)-sphingosylphosphocholine = an N-(acyl)-sphingosyl-1,3-cyclic phosphate + choline. The catalysed reaction is an N-(acyl)-sphingosylphosphoethanolamine = an N-(acyl)-sphingosyl-1,3-cyclic phosphate + ethanolamine. The enzyme catalyses a 1-acyl-sn-glycero-3-phosphocholine = a 1-acyl-sn-glycero-2,3-cyclic phosphate + choline. It carries out the reaction a 1-acyl-sn-glycero-3-phosphoethanolamine = a 1-acyl-sn-glycero-2,3-cyclic phosphate + ethanolamine. Its function is as follows. Dermonecrotic toxins cleave the phosphodiester linkage between the phosphate and headgroup of certain phospholipids (sphingolipid and lysolipid substrates), forming an alcohol (often choline) and a cyclic phosphate. This toxin acts on sphingomyelin (SM). It may also act on ceramide phosphoethanolamine (CPE), lysophosphatidylcholine (LPC) and lysophosphatidylethanolamine (LPE), but not on lysophosphatidylserine (LPS), and lysophosphatidylglycerol (LPG). It acts by transphosphatidylation, releasing exclusively cyclic phosphate products as second products. Induces dermonecrosis, hemolysis, increased vascular permeability, edema, inflammatory response, and platelet aggregation. This is Dermonecrotic toxin LdSicTox-alphaIB3aiii from Loxosceles deserta (Desert recluse spider).